The sequence spans 223 residues: Phosphoglycolate phosphatase (223 aa).

Residue Asp10 is the Nucleophile of the active site. Residues Asp10 and Asp12 each coordinate Mg(2+). Substrate is bound at residue Lys149. Mg(2+) contacts are provided by Asp172 and Asp176.

It belongs to the archaeal SPP-like hydrolase family. The cofactor is Mg(2+).

It carries out the reaction 2-phosphoglycolate + H2O = glycolate + phosphate. Functionally, catalyzes the dephosphorylation of 2-phosphoglycolate. The chain is Phosphoglycolate phosphatase from Archaeoglobus fulgidus (strain ATCC 49558 / DSM 4304 / JCM 9628 / NBRC 100126 / VC-16).